We begin with the raw amino-acid sequence, 99 residues long: Defensin-like protein 2 (99 aa).

The signal sequence occupies residues 1–30 (MAMAKKSVSSFTLIFILVLVIFEVPEIKAQ). 4 disulfides stabilise this stretch: Cys-34–Cys-86, Cys-47–Cys-71, Cys-56–Cys-81, and Cys-60–Cys-83. A propeptide spanning residues 94–99 (ILRGGI) is cleaved from the precursor.

The protein belongs to the DEFL family. Protease inhibitor I18 (RTI/MTI-2) subfamily.

The protein resides in the secreted. Inhibits bovine beta-trypsin and alpha-chymotrypsin on a 1:1 molar basis. This is Defensin-like protein 2 from Sinapis alba (White mustard).